Consider the following 843-residue polypeptide: Major vault protein alpha (843 aa).

Ala-2 carries the post-translational modification N-acetylalanine. 9 MVP repeats span residues 2–56 (ADLN…IPQR), 57–111 (NYCT…KVTA), 112–163 (LQVV…EEIK), 164–216 (ATII…EIVN), 217–272 (AYVL…GEVH), 273–324 (ITTL…IHNI), 325–376 (YVLT…KRES), 377–442 (IPLD…STRV), and 443–505 (VTYR…FLGP). The tract at residues 643-663 (QEAAARHEAERLEQGARGRLE) is disordered. Residues 646–663 (AARHEAERLEQGARGRLE) show a composition bias toward basic and acidic residues.

As to quaternary structure, the vault ribonucleoprotein particle is a huge (400 A x 670 A) cage structure of 12.9 MDa. It consists of a dimer of half-vaults, with each half-vault comprising 39 identical major vault protein (MVP) chains. Dictyostelium is one of the few organisms in which the major component is actually two proteins (alpha and beta).

Its subcellular location is the cytoplasm. The protein resides in the nucleus. Unknown, though MVP-alpha is required for normal vault structure. The chain is Major vault protein alpha (mvpA) from Dictyostelium discoideum (Social amoeba).